A 474-amino-acid polypeptide reads, in one-letter code: 3-isopropylmalate dehydratase large subunit (474 aa).

[4Fe-4S] cluster is bound by residues Cys-355, Cys-415, and Cys-418.

The protein belongs to the aconitase/IPM isomerase family. LeuC type 1 subfamily. In terms of assembly, heterodimer of LeuC and LeuD. Requires [4Fe-4S] cluster as cofactor.

The enzyme catalyses (2R,3S)-3-isopropylmalate = (2S)-2-isopropylmalate. It participates in amino-acid biosynthesis; L-leucine biosynthesis; L-leucine from 3-methyl-2-oxobutanoate: step 2/4. Functionally, catalyzes the isomerization between 2-isopropylmalate and 3-isopropylmalate, via the formation of 2-isopropylmaleate. This chain is 3-isopropylmalate dehydratase large subunit, found in Shewanella sp. (strain MR-4).